We begin with the raw amino-acid sequence, 355 residues long: Blue-sensitive opsin P467 (355 aa).

Residues 1–36 (MNGTEGINFYVPLSNKTGLVRSPFEYPQYYLADPWK) lie on the Extracellular side of the membrane. N-linked (GlcNAc...) asparagine glycans are attached at residues Asn2 and Asn15. A helical membrane pass occupies residues 37–61 (FKVLSFYMFFLIAAGMPLNGLTLFV). At 62-73 (TFQHKKLRQPLN) the chain is on the cytoplasmic side. Residues 74–98 (YILVNLAAANLVTVCCGFTVTFYAS) form a helical membrane-spanning segment. The Extracellular segment spans residues 99–113 (WYAYFVFGPIGCAIE). A disulfide bridge connects residues Cys110 and Cys187. A helical transmembrane segment spans residues 114–133 (GFFATIGGQVALWSLVVLAI). At 134–152 (ERYIVICKPMGNFRFSATH) the chain is on the cytoplasmic side. The helical transmembrane segment at 153-176 (AIMGIAFTWFMALACAGPPLFGWS) threads the bilayer. Residues 177–202 (RFIPEGMQCSCGPDYYTLNPDFHNES) lie on the Extracellular side of the membrane. An N-linked (GlcNAc...) asparagine glycan is attached at Asn200. Residues 203–230 (YVIYMFIVHFTVPMVVIFFSYGRLVCKV) traverse the membrane as a helical segment. The Cytoplasmic segment spans residues 231-252 (REAAAQQQESATTQKAEKEVTR). Residues 253-276 (MVILMVLGFLLAWTPYAATAIWIF) form a helical membrane-spanning segment. At 277–284 (TNRGAAFS) the chain is on the extracellular side. The helical transmembrane segment at 285–309 (VTFMTIPAFFSKSSSIYNPIIYVLL) threads the bilayer. Residue Lys296 is modified to N6-(retinylidene)lysine. The Cytoplasmic segment spans residues 310 to 355 (NKQFRNCMVTTICCGKNPFGDEDVSSSVSQSKTEVSSVSSSQVAPA). The disordered stretch occupies residues 333 to 355 (VSSSVSQSKTEVSSVSSSQVAPA). Residues 334-355 (SSSVSQSKTEVSSVSSSQVAPA) show a composition bias toward low complexity.

This sequence belongs to the G-protein coupled receptor 1 family. Opsin subfamily. Phosphorylated on some or all of the serine and threonine residues present in the C-terminal region. In terms of tissue distribution, in this lizard the color pigments are found in the rod-shaped photoreceptor cells which have been derived from ancestral cone-like photoreceptors.

It localises to the membrane. In terms of biological role, visual pigments are the light-absorbing molecules that mediate vision. They consist of an apoprotein, opsin, covalently linked to cis-retinal. The protein is Blue-sensitive opsin P467 of Gekko gecko (Tokay gecko).